Reading from the N-terminus, the 85-residue chain is Mitochondrial import inner membrane translocase subunit TIM9 (85 aa).

Residues 35-59 carry the Twin CX3C motif motif; it reads CFTDCVNDFTSKALSSREESCLEKC. Cystine bridges form between Cys-35/Cys-59 and Cys-39/Cys-55.

The protein belongs to the small Tim family. As to quaternary structure, heterohexamer; composed of 3 copies of TIM9 and 3 copies of TIM10, named soluble 70 kDa complex. Associates with the TIM22 complex, whose core is composed of TIM22 and TIM54. Interacts with the transmembrane regions of multi-pass transmembrane proteins in transit.

The protein localises to the mitochondrion inner membrane. Mitochondrial intermembrane chaperone that participates in the import and insertion of multi-pass transmembrane proteins into the mitochondrial inner membrane. Also required for the transfer of beta-barrel precursors from the TOM complex to the sorting and assembly machinery (SAM complex) of the outer membrane. Acts as a chaperone-like protein that protects the hydrophobic precursors from aggregation and guide them through the mitochondrial intermembrane space. In Yarrowia lipolytica (strain CLIB 122 / E 150) (Yeast), this protein is Mitochondrial import inner membrane translocase subunit TIM9 (TIM9).